The chain runs to 202 residues: ATP synthase subunit b (202 aa).

Residues Thr9 to Ala29 form a helical membrane-spanning segment.

It belongs to the ATPase B chain family. In terms of assembly, F-type ATPases have 2 components, F(1) - the catalytic core - and F(0) - the membrane proton channel. F(1) has five subunits: alpha(3), beta(3), gamma(1), delta(1), epsilon(1). F(0) has three main subunits: a(1), b(2) and c(10-14). The alpha and beta chains form an alternating ring which encloses part of the gamma chain. F(1) is attached to F(0) by a central stalk formed by the gamma and epsilon chains, while a peripheral stalk is formed by the delta and b chains.

The protein localises to the cell inner membrane. In terms of biological role, f(1)F(0) ATP synthase produces ATP from ADP in the presence of a proton or sodium gradient. F-type ATPases consist of two structural domains, F(1) containing the extramembraneous catalytic core and F(0) containing the membrane proton channel, linked together by a central stalk and a peripheral stalk. During catalysis, ATP synthesis in the catalytic domain of F(1) is coupled via a rotary mechanism of the central stalk subunits to proton translocation. Its function is as follows. Component of the F(0) channel, it forms part of the peripheral stalk, linking F(1) to F(0). In Pelobacter propionicus (strain DSM 2379 / NBRC 103807 / OttBd1), this protein is ATP synthase subunit b.